We begin with the raw amino-acid sequence, 451 residues long: Bifunctional protein GlmU (451 aa).

Residues 1 to 217 (MKTLILAAGL…IDEVTGVNDR (217 aa)) form a pyrophosphorylase region. UDP-N-acetyl-alpha-D-glucosamine contacts are provided by residues 6–9 (LAAG), K20, Q68, 73–74 (GT), 95–97 (YGD), G134, E146, N161, and N215. Residue D97 coordinates Mg(2+). Residue N215 participates in Mg(2+) binding. The linker stretch occupies residues 218 to 238 (IQLSKLEKNMRKRINEKLMRE). The interval 239 to 451 (GVRIIDPESV…GGNQNADSKE (213 aa)) is N-acetyltransferase. UDP-N-acetyl-alpha-D-glucosamine contacts are provided by R320 and K338. H350 serves as the catalytic Proton acceptor. Residues Y353 and N364 each contribute to the UDP-N-acetyl-alpha-D-glucosamine site. Acetyl-CoA-binding positions include A367, 373–374 (NY), S392, A410, and R427.

The protein in the N-terminal section; belongs to the N-acetylglucosamine-1-phosphate uridyltransferase family. This sequence in the C-terminal section; belongs to the transferase hexapeptide repeat family. Homotrimer. The cofactor is Mg(2+).

The protein localises to the cytoplasm. It carries out the reaction alpha-D-glucosamine 1-phosphate + acetyl-CoA = N-acetyl-alpha-D-glucosamine 1-phosphate + CoA + H(+). It catalyses the reaction N-acetyl-alpha-D-glucosamine 1-phosphate + UTP + H(+) = UDP-N-acetyl-alpha-D-glucosamine + diphosphate. It participates in nucleotide-sugar biosynthesis; UDP-N-acetyl-alpha-D-glucosamine biosynthesis; N-acetyl-alpha-D-glucosamine 1-phosphate from alpha-D-glucosamine 6-phosphate (route II): step 2/2. It functions in the pathway nucleotide-sugar biosynthesis; UDP-N-acetyl-alpha-D-glucosamine biosynthesis; UDP-N-acetyl-alpha-D-glucosamine from N-acetyl-alpha-D-glucosamine 1-phosphate: step 1/1. The protein operates within bacterial outer membrane biogenesis; LPS lipid A biosynthesis. In terms of biological role, catalyzes the last two sequential reactions in the de novo biosynthetic pathway for UDP-N-acetylglucosamine (UDP-GlcNAc). The C-terminal domain catalyzes the transfer of acetyl group from acetyl coenzyme A to glucosamine-1-phosphate (GlcN-1-P) to produce N-acetylglucosamine-1-phosphate (GlcNAc-1-P), which is converted into UDP-GlcNAc by the transfer of uridine 5-monophosphate (from uridine 5-triphosphate), a reaction catalyzed by the N-terminal domain. This Thermosipho africanus (strain TCF52B) protein is Bifunctional protein GlmU.